We begin with the raw amino-acid sequence, 747 residues long: WD repeat-containing protein 91 (747 aa).

A coiled-coil region spans residues 183–227; the sequence is QRTNQVQEENEVLRQKLFALQAEVHRLKKEEQQQEEAAALVQHKL. The residue at position 256 (Ser256) is a Phosphoserine. Residues 265 to 278 are compositionally biased toward low complexity; the sequence is LLPQSKKSPSRLSP. A disordered region spans residues 265–358; sequence LLPQSKKSPS…SQTQCAEKKL (94 aa). The span at 283–299 shows a compositional bias: polar residues; the sequence is PQAQSSAKKDTFSSQAT. The residue at position 288 (Ser288) is a Phosphoserine. Over residues 332-343 the composition is skewed to basic and acidic residues; that stretch reads RLQDHGKERREL. The span at 344-353 shows a compositional bias: polar residues; the sequence is LSTSSSQTQC. WD repeat units lie at residues 406-445, 448-488, 511-555, 560-599, 602-641, 664-702, and 709-747; these read EHHSSIMHCRVDCSGRRVASLDVDGVIKVWSFNPIMQTKA, ISKS…NLCE, VCSA…QQLQ, PEPIAINCTAFNHNGNLLVTGAADGVIRLFDMQQHGCAMS, AHCGEVYSVEFSYDENAVNSIGEDGKFIQWNIHKSGLKVS, VQVPRGRLFAFDSEGNYMLTCSATGGLIYKLGSEEKVLE, and GHRAPVVTVDWSTAMDCGTCLTASMDGKIKLTTLLAHKL.

Belongs to the WD repeat WDR91 family. In terms of assembly, interacts with WDR81; involved in early to late endosome cargo transport. Interacts with BECN1; negatively regulates the PI3 kinase/PI3K activity associated with endosomal membranes.

The protein localises to the early endosome membrane. It localises to the late endosome membrane. Functions as a negative regulator of the PI3 kinase/PI3K activity associated with endosomal membranes via BECN1, a core subunit of the PI3K complex. By modifying the phosphatidylinositol 3-phosphate/PtdInsP3 content of endosomal membranes may regulate endosome fusion, recycling, sorting and early to late endosome transport. It is for instance, required for the delivery of cargos like BST2/tetherin from early to late endosome and thereby participates indirectly to their degradation by the lysosome. May play a role in meiosis. The chain is WD repeat-containing protein 91 from Rattus norvegicus (Rat).